A 307-amino-acid polypeptide reads, in one-letter code: Methionyl-tRNA formyltransferase (307 aa).

109–112 is a binding site for (6S)-5,6,7,8-tetrahydrofolate; that stretch reads SLLP.

This sequence belongs to the Fmt family.

The catalysed reaction is L-methionyl-tRNA(fMet) + (6R)-10-formyltetrahydrofolate = N-formyl-L-methionyl-tRNA(fMet) + (6S)-5,6,7,8-tetrahydrofolate + H(+). Functionally, attaches a formyl group to the free amino group of methionyl-tRNA(fMet). The formyl group appears to play a dual role in the initiator identity of N-formylmethionyl-tRNA by promoting its recognition by IF2 and preventing the misappropriation of this tRNA by the elongation apparatus. The polypeptide is Methionyl-tRNA formyltransferase (Dechloromonas aromatica (strain RCB)).